The chain runs to 267 residues: GTP cyclohydrolase FolE2 (267 aa).

The protein belongs to the GTP cyclohydrolase IV family.

It carries out the reaction GTP + H2O = 7,8-dihydroneopterin 3'-triphosphate + formate + H(+). It participates in cofactor biosynthesis; 7,8-dihydroneopterin triphosphate biosynthesis; 7,8-dihydroneopterin triphosphate from GTP: step 1/1. Converts GTP to 7,8-dihydroneopterin triphosphate. The chain is GTP cyclohydrolase FolE2 from Nitrosomonas eutropha (strain DSM 101675 / C91 / Nm57).